A 551-amino-acid chain; its full sequence is Cytochrome c oxidase subunit 1 (551 aa).

A helical membrane pass occupies residues 29 to 49; it reads VIGIQYLVTSFLFFFIGGSFA. Histidine 76 contacts Fe(II)-heme a. The next 11 helical transmembrane spans lie at 79–99, 113–133, 156–176, 205–225, 245–265, 283–303, 313–333, 348–368, 382–402, 424–444, and 466–486; these read IMIF…LIPL, AVAF…FFVG, LWIL…INFV, LILL…FDLI, LFWF…FGVI, IAYS…HHMF, MFFM…IFSW, MLFA…GVMV, FVVG…LFSG, FILT…LGLM, and IGAY…FWSL. 4 residues coordinate Cu cation: histidine 251, tyrosine 255, histidine 300, and histidine 301. A cross-link (1'-histidyl-3'-tyrosine (His-Tyr)) is located at residues 251 to 255; it reads HPAVY. Heme a3 is bound at residue histidine 386. Histidine 388 contacts Fe(II)-heme a.

This sequence belongs to the heme-copper respiratory oxidase family. Requires Cu(2+) as cofactor. Heme is required as a cofactor.

The protein localises to the cell membrane. The catalysed reaction is 4 Fe(II)-[cytochrome c] + O2 + 8 H(+)(in) = 4 Fe(III)-[cytochrome c] + 2 H2O + 4 H(+)(out). Its pathway is energy metabolism; oxidative phosphorylation. In terms of biological role, cytochrome c oxidase is the component of the respiratory chain that catalyzes the reduction of oxygen to water. Subunits 1-3 form the functional core of the enzyme complex. CO I is the catalytic subunit of the enzyme. Electrons originating in cytochrome c are transferred via the copper A center of subunit 2 and heme A of subunit 1 to the bimetallic center formed by heme A3 and copper B. The sequence is that of Cytochrome c oxidase subunit 1 (ctaD) from Synechocystis sp. (strain ATCC 27184 / PCC 6803 / Kazusa).